The following is a 463-amino-acid chain: Increased DNA methylation 3 (463 aa).

A compositionally biased stretch (basic and acidic residues) spans 169 to 182; sequence NLDESRETEQDCSR. Disordered regions lie at residues 169–199 and 300–347; these read NLDESRETEQDCSRNGDATANGVVTNEDYNS and RRFK…TTGT. Polar residues predominate over residues 184 to 199; sequence GDATANGVVTNEDYNS. The segment covering 300 to 310 has biased composition (basic residues); that stretch reads RRFKNSSKKAT.

Interacts with MBD7 (via C-terminus), IDM1 and IDM2. Part of a complex made of MBD7, IDM1, IDM2 and IDM3.

It localises to the nucleus. Its function is as follows. Acts as an anti-silencing factor that prevents DNA hypermethylation and gene repression. This is Increased DNA methylation 3 from Arabidopsis thaliana (Mouse-ear cress).